A 151-amino-acid polypeptide reads, in one-letter code: Ribonuclease H (151 aa).

The RNase H type-1 domain occupies 1–143; sequence MEEYVIYTDG…VDRVARKEAA (143 aa). Residues aspartate 9, glutamate 48, aspartate 71, and aspartate 135 each contribute to the Mg(2+) site.

This sequence belongs to the RNase H family. As to quaternary structure, monomer. Requires Mg(2+) as cofactor.

The protein resides in the cytoplasm. The catalysed reaction is Endonucleolytic cleavage to 5'-phosphomonoester.. In terms of biological role, endonuclease that specifically degrades the RNA of RNA-DNA hybrids. This chain is Ribonuclease H, found in Neorickettsia sennetsu (strain ATCC VR-367 / Miyayama) (Ehrlichia sennetsu).